A 155-amino-acid chain; its full sequence is Transcriptional repressor NrdR (155 aa).

A zinc finger lies at 3–34 (CPFCAANDTKVIDSRLVAEGDQVRRRRECVAC). The ATP-cone domain occupies 49–139 (PRLIKQDGSR…VYRRFQDLNE (91 aa)).

The protein belongs to the NrdR family. It depends on Zn(2+) as a cofactor.

In terms of biological role, negatively regulates transcription of bacterial ribonucleotide reductase nrd genes and operons by binding to NrdR-boxes. In Ectopseudomonas mendocina (strain ymp) (Pseudomonas mendocina), this protein is Transcriptional repressor NrdR.